Reading from the N-terminus, the 932-residue chain is MIPARLHRDYKGLVLLGILLGTLWETGCTQIRYSVPEELEKGSRVGDISRDLGLEPRELAERGVRIIPRGRTQLFALNPRSGSLVTAGRIDREELCMGAIKCQLNLDILMEDKVKIYGVEVEVRDINDNAPYFRESELEIKISENAATEMRFPLPHAWDPDIGKNSLQSYELSPNTHFSLIVQNGADGSKYPELVLKRALDREEKAAHHLVLTASDGGDPVRTGTARIRVMVLDANDNAPAFAQPEYRASVPENLALGTQLLVVNATDPDEGVNAEVRYSFRYVDDKAAQVFKLDCNSGTISTIGELDHEESGFYQMEVQAMDNAGYSARAKVLITVLDVNDNAPEVVLTSLASSVPENSPRGTLIALLNVNDQDSEENGQVICFIQGNLPFKLEKSYGNYYSLVTDIVLDREQVPSYNITVTATDRGTPPLSTETHISLNVADTNDNPPVFPQASYSAYIPENNPRGVSLVSVTAHDPDCEENAQITYSLAENTIQGASLSSYVSINSDTGVLYALSSFDYEQFRDLQVKVMARDNGHPPLSSNVSLSLFVLDQNDNAPEILYPALPTDGSTGVELAPRSAEPGYLVTKVVAVDRDSGQNAWLSYRLLKASEPGLFSVGLHTGEVRTARALLDRDALKQSLVVAVQDHGQPPLSATVTLTVAVADSIPQVLADLGSLESPANSETSDLTLYLVVAVAAVSCVFLAFVILLLALRLRRWHKSRLLQASGGGLTGAPASHFVGVDGVQAFLQTYSHEVSLTTDSRKSHLIFPQPNYADMLVSQESFEKSEPLLLSGDSVFSKDSHGLIEQAPPNTDWRFSQAQRPGTSGSQNGDDTGTWPNNQFDTEMLQAMILASASEAADGSSTLGGGAGTMGLSARYGPQFTLQHVPDYRQNVYIPGSNATLTNAAGKRDGKAPAGGNGNKKKSGKKEKK.

Positions 1–29 are cleaved as a signal peptide; it reads MIPARLHRDYKGLVLLGILLGTLWETGCT. Cadherin domains are found at residues 30–133, 134–242, 243–347, 348–452, 453–562, and 570–683; these read QIRY…APYF, RESE…APAF, AQPE…APEV, VLTS…PPVF, PQAS…APEI, and DGST…SPAN. Topologically, residues 30–692 are extracellular; that stretch reads QIRYSVPEEL…NSETSDLTLY (663 aa). N-linked (GlcNAc...) asparagine glycosylation is found at N265, N419, and N545. A helical transmembrane segment spans residues 693-713; sequence LVVAVAAVSCVFLAFVILLLA. Topologically, residues 714-932 are cytoplasmic; that stretch reads LRLRRWHKSR…KKKSGKKEKK (219 aa). Disordered stretches follow at residues 803–841 and 902–932; these read SHGL…WPNN and ATLT…KEKK. A compositionally biased stretch (polar residues) spans 816 to 841; that stretch reads WRFSQAQRPGTSGSQNGDDTGTWPNN. Basic residues predominate over residues 922–932; it reads NKKKSGKKEKK.

It is found in the cell membrane. Potential calcium-dependent cell-adhesion protein. May be involved in the establishment and maintenance of specific neuronal connections in the brain. The sequence is that of Protocadherin gamma-A12 (PCDHGA12) from Homo sapiens (Human).